The sequence spans 264 residues: Phosphonoacetaldehyde hydrolase (264 aa).

Asp-9 functions as the Nucleophile in the catalytic mechanism. Mg(2+) is bound by residues Asp-9 and Ala-11. Lys-50 functions as the Schiff-base intermediate with substrate in the catalytic mechanism. Asp-183 is a binding site for Mg(2+).

Belongs to the HAD-like hydrolase superfamily. PhnX family. As to quaternary structure, homodimer. Mg(2+) serves as cofactor.

The catalysed reaction is phosphonoacetaldehyde + H2O = acetaldehyde + phosphate + H(+). Functionally, involved in phosphonate degradation. The sequence is that of Phosphonoacetaldehyde hydrolase from Bacillus thuringiensis (strain Al Hakam).